The primary structure comprises 503 residues: Probable cytosol aminopeptidase (503 aa).

Mn(2+) is bound by residues lysine 274 and aspartate 279. Lysine 286 is a catalytic residue. Mn(2+)-binding residues include aspartate 297, aspartate 356, and glutamate 358. Arginine 360 is a catalytic residue.

The protein belongs to the peptidase M17 family. Mn(2+) is required as a cofactor.

It is found in the cytoplasm. The enzyme catalyses Release of an N-terminal amino acid, Xaa-|-Yaa-, in which Xaa is preferably Leu, but may be other amino acids including Pro although not Arg or Lys, and Yaa may be Pro. Amino acid amides and methyl esters are also readily hydrolyzed, but rates on arylamides are exceedingly low.. The catalysed reaction is Release of an N-terminal amino acid, preferentially leucine, but not glutamic or aspartic acids.. Its function is as follows. Presumably involved in the processing and regular turnover of intracellular proteins. Catalyzes the removal of unsubstituted N-terminal amino acids from various peptides. The chain is Probable cytosol aminopeptidase from Burkholderia multivorans (strain ATCC 17616 / 249).